The primary structure comprises 223 residues: Endonuclease V (223 aa).

The Mg(2+) site is built by aspartate 45 and aspartate 113.

It belongs to the endonuclease V family. Mg(2+) is required as a cofactor.

It is found in the cytoplasm. The enzyme catalyses Endonucleolytic cleavage at apurinic or apyrimidinic sites to products with a 5'-phosphate.. Functionally, DNA repair enzyme involved in the repair of deaminated bases. Selectively cleaves double-stranded DNA at the second phosphodiester bond 3' to a deoxyinosine leaving behind the intact lesion on the nicked DNA. In Dehalococcoides mccartyi (strain CBDB1), this protein is Endonuclease V.